The sequence spans 211 residues: N,O-diacetylmuramidase (211 aa).

Catalysis depends on residues Asp6 and Glu100. Cys108 and Cys147 are joined by a disulfide.

This sequence belongs to the glycosyl hydrolase 25 family.

It localises to the secreted. The protein resides in the extracellular space. It carries out the reaction Hydrolysis of (1-&gt;4)-beta-linkages between N-acetylmuramic acid and N-acetyl-D-glucosamine residues in a peptidoglycan and between N-acetyl-D-glucosamine residues in chitodextrins.. In terms of biological role, this enzyme has both lysozyme (acetylmuramidase) and diacetylmuramidase activities. The protein is N,O-diacetylmuramidase of Chalaropsis sp.